A 393-amino-acid polypeptide reads, in one-letter code: Ornithine decarboxylase 2 (393 aa).

Lys-62 carries the post-translational modification N6-(pyridoxal phosphate)lysine. Residues Ser-194, Gly-231, and 265–268 (EPGR) each bind pyridoxal 5'-phosphate. 314–315 (YY) serves as a coordination point for substrate. Cys-343 functions as the Proton donor; shared with dimeric partner in the catalytic mechanism. Asp-344 contributes to the substrate binding site. Tyr-371 lines the pyridoxal 5'-phosphate pocket.

The protein belongs to the Orn/Lys/Arg decarboxylase class-II family. Homodimer. Only the dimer is catalytically active, as the active sites are constructed of residues from both monomers. The cofactor is pyridoxal 5'-phosphate.

The catalysed reaction is L-ornithine + H(+) = putrescine + CO2. It functions in the pathway amine and polyamine biosynthesis; putrescine biosynthesis via L-ornithine pathway; putrescine from L-ornithine: step 1/1. Inhibited by antizyme (AZ) in response to polyamine levels. AZ inhibits the assembly of the functional homodimer by binding to ODC monomers and targeting them for ubiquitin-independent proteolytic destruction by the 26S proteasome. Functionally, catalyzes the first and rate-limiting step of polyamine biosynthesis that converts ornithine into putrescine, which is the precursor for the polyamines, spermidine and spermine. Polyamines are essential for cell proliferation and are implicated in cellular processes, ranging from DNA replication to apoptosis. The protein is Ornithine decarboxylase 2 (Odc2) of Drosophila melanogaster (Fruit fly).